Consider the following 213-residue polypeptide: ER lumen protein-retaining receptor erd-2.2 (213 aa).

The Lumenal portion of the chain corresponds to Met-1–Asn-2. Residues Ile-3–Leu-21 form a helical membrane-spanning segment. Residues Lys-22 to Arg-35 are Cytoplasmic-facing. Residues Ser-36–Ser-53 form a helical membrane-spanning segment. The Lumenal portion of the chain corresponds to Thr-54–Thr-61. A helical transmembrane segment spans residues Thr-62–Phe-80. Topologically, residues Lys-81–Glu-96 are cytoplasmic. A helical transmembrane segment spans residues Leu-97–Asn-110. Over His-111–Glu-117 the chain is Lumenal. Residues Leu-118–Leu-137 form a helical membrane-spanning segment. Over Leu-138–Ala-149 the chain is Cytoplasmic. Residues His-150–Tyr-168 form a helical membrane-spanning segment. Topologically, residues Arg-169–Pro-178 are lumenal. The chain crosses the membrane as a helical span at residues Ile-179 to Val-199. At Thr-200 to Ile-213 the chain is on the cytoplasmic side.

It belongs to the ERD2 family.

It is found in the endoplasmic reticulum membrane. Required for the retention of luminal endoplasmic reticulum proteins. Determines the specificity of the luminal ER protein retention system. Also required for normal vesicular traffic through the Golgi. In Caenorhabditis elegans, this protein is ER lumen protein-retaining receptor erd-2.2.